Consider the following 326-residue polypeptide: Protoheme IX farnesyltransferase (326 aa).

Helical transmembrane passes span 35–55 (LIPL…GWPL), 60–80 (LVCT…LNCL), 106–126 (SAFI…VSGV), 129–149 (LAAG…TALL), 157–177 (IVIG…AATG), 185–205 (WLFA…ALLL), 242–262 (GFGV…LLPF), and 283–303 (AKGL…LLIL).

Belongs to the UbiA prenyltransferase family. Protoheme IX farnesyltransferase subfamily.

The protein localises to the cell inner membrane. The enzyme catalyses heme b + (2E,6E)-farnesyl diphosphate + H2O = Fe(II)-heme o + diphosphate. Its pathway is porphyrin-containing compound metabolism; heme O biosynthesis; heme O from protoheme: step 1/1. Its function is as follows. Converts heme B (protoheme IX) to heme O by substitution of the vinyl group on carbon 2 of heme B porphyrin ring with a hydroxyethyl farnesyl side group. In Parasynechococcus marenigrum (strain WH8102), this protein is Protoheme IX farnesyltransferase.